A 31-amino-acid chain; its full sequence is Small protein MgtS (31 aa).

Residues 1 to 4 are Periplasmic-facing; the sequence is MLGN. A helical transmembrane segment spans residues 5–25; the sequence is MNVFMAVLGIILFSGFLAAYF. Residues 26–31 are Cytoplasmic-facing; the sequence is SHKWDD.

As to quaternary structure, interacts with MgtA.

It is found in the cell inner membrane. Functionally, modulates intracellular Mg(2+) levels to maintain cellular integrity upon Mg(2+) limitation. Acts by binding and stabilizing the Mg(2+) transporter MgtA, thereby leading to increased intracellular level of Mg(2+). May inhibit FtsH proteolysis of MgtA. The sequence is that of Small protein MgtS from Escherichia coli (strain K12).